Consider the following 186-residue polypeptide: Peptide deformylase (186 aa).

Fe cation contacts are provided by C113 and H157. The active site involves E158. Position 161 (H161) interacts with Fe cation.

The protein belongs to the polypeptide deformylase family. It depends on Fe(2+) as a cofactor.

The catalysed reaction is N-terminal N-formyl-L-methionyl-[peptide] + H2O = N-terminal L-methionyl-[peptide] + formate. In terms of biological role, removes the formyl group from the N-terminal Met of newly synthesized proteins. Requires at least a dipeptide for an efficient rate of reaction. N-terminal L-methionine is a prerequisite for activity but the enzyme has broad specificity at other positions. This Malacoplasma penetrans (strain HF-2) (Mycoplasma penetrans) protein is Peptide deformylase.